The primary structure comprises 446 residues: MREIVHIQAGQCGNQIGTKFWEVISDEHGIDPAGGYVGDSALQLERINVYYNESSSQKYVPRAALVDLEPGTMDSVRSGPFGQLFRPDNFIFGQTGAGNNWAKGHYTEGAELVDSVLDVVRKECEHCDCLQGFQLTHSLGGGTGSGMGTLLISKIREEYPDRIMNTFSVMPSPKVSDTVVEPYNATLSVHQLVENTDETYCIDNEALYDICFRTLKLTTPTYGDLNHLVSATMSGVTTSLRFPGQLNADLRKLAVNMVPFPRLHFFMPGFAPLTARGSQQYRALTVPELTQQMFDAKNMMAACDPRHGRYLTVAAVFRGPMSMKEVDEQMLAIQNKNSSYFVEWIPNNVKVAVCDIPPRGLKMSATFIGNSTAIQELFKRISEQFSAMFRRKAFLHWFTGEGMDEMEFTEAESNMNDLVSEYQQYQDATADEGEEAFEDDEEEVNE.

Positions 1-4 (MREI) match the MREI motif motif. The GTP site is built by glutamine 11, glutamate 69, serine 138, glycine 142, threonine 143, and glycine 144. A Mg(2+)-binding site is contributed by glutamate 69. At serine 172 the chain carries Phosphoserine; by CDK1. GTP-binding residues include asparagine 204 and asparagine 226. Residue glutamate 438 is modified to 5-glutamyl polyglutamate.

The protein belongs to the tubulin family. As to quaternary structure, dimer of alpha and beta chains. A typical microtubule is a hollow water-filled tube with an outer diameter of 25 nm and an inner diameter of 15 nM. Alpha-beta heterodimers associate head-to-tail to form protofilaments running lengthwise along the microtubule wall with the beta-tubulin subunit facing the microtubule plus end conferring a structural polarity. Microtubules usually have 13 protofilaments but different protofilament numbers can be found in some organisms and specialized cells. Mg(2+) is required as a cofactor. Post-translationally, some glutamate residues at the C-terminus are polyglycylated, resulting in polyglycine chains on the gamma-carboxyl group. Glycylation is mainly limited to tubulin incorporated into axonemes (cilia and flagella) whereas glutamylation is prevalent in neuronal cells, centrioles, axonemes, and the mitotic spindle. Both modifications can coexist on the same protein on adjacent residues, and lowering polyglycylation levels increases polyglutamylation, and reciprocally. Cilia and flagella glycylation is required for their stability and maintenance. Flagella glycylation controls sperm motility. Some glutamate residues at the C-terminus are polyglutamylated, resulting in polyglutamate chains on the gamma-carboxyl group. Polyglutamylation plays a key role in microtubule severing by spastin (SPAST). SPAST preferentially recognizes and acts on microtubules decorated with short polyglutamate tails: severing activity by SPAST increases as the number of glutamates per tubulin rises from one to eight, but decreases beyond this glutamylation threshold. Glutamylation is also involved in cilia motility. In terms of processing, phosphorylated on Ser-172 by CDK1 during the cell cycle, from metaphase to telophase, but not in interphase. This phosphorylation inhibits tubulin incorporation into microtubules.

It localises to the cytoplasm. It is found in the cytoskeleton. In terms of biological role, tubulin is the major constituent of microtubules, a cylinder consisting of laterally associated linear protofilaments composed of alpha- and beta-tubulin heterodimers. Microtubules grow by the addition of GTP-tubulin dimers to the microtubule end, where a stabilizing cap forms. Below the cap, tubulin dimers are in GDP-bound state, owing to GTPase activity of alpha-tubulin. This is Tubulin beta-6 chain (TUBB6) from Bos taurus (Bovine).